The primary structure comprises 437 residues: GTPase Obg (437 aa).

The 159-residue stretch at 2–160 (SMFLDTAKVS…RQLELELKIL (159 aa)) folds into the Obg domain. In terms of domain architecture, OBG-type G spans 161–338 (ADVGLVGFPS…LLEATAELLA (178 aa)). Residues 167-174 (GFPSVGKS), 192-196 (FTTIV), 214-217 (DLPG), 284-287 (NKMD), and 319-321 (SSL) contribute to the GTP site. 2 residues coordinate Mg(2+): S174 and T194. In terms of domain architecture, OCT spans 359 to 437 (GFAAEEKAFE…IGKFEFEFVD (79 aa)).

This sequence belongs to the TRAFAC class OBG-HflX-like GTPase superfamily. OBG GTPase family. As to quaternary structure, monomer. Mg(2+) is required as a cofactor.

Its subcellular location is the cytoplasm. In terms of biological role, an essential GTPase which binds GTP, GDP and possibly (p)ppGpp with moderate affinity, with high nucleotide exchange rates and a fairly low GTP hydrolysis rate. Plays a role in control of the cell cycle, stress response, ribosome biogenesis and in those bacteria that undergo differentiation, in morphogenesis control. The chain is GTPase Obg from Streptococcus equi subsp. equi (strain 4047).